Reading from the N-terminus, the 698-residue chain is MYRTRSSDEVTTSTDLTSSSDVATSVDPTTSVISSTSADPTTSADSTTSTVQTTSAGPSNNIGNSTLANSTTFAVSSTSIDPTSSSDVITSTVQTTSIEPTTSLVSSNDITTSTSLNISVVISTSTDSTSLIESTTTVGPHASSSVAGMYRTRSSDEVTTSTDPTSSSDVATSADPTSSSAVTTLVDPTTSVVISTSVDQTSSSDVATSVDPTTSVISSTSADPTTSADSTTSTVQTTSVDPTSSVVSSAPVDPASSVVSLTSSYPTSSSTVTISANSNGSATLAAQTTSIDPVSSIVSSSGATTIISSASIDPASSVVSSTSSEPTSFIVSSTSVYSTRPSGPTTSTDLATFSDTIILRVSTTSTSQDTQTVSSSLTDMVSSTGSADLSVSSIQRSQVDPSTFAVSNSPVYPTASTGSTSTGIPIASESLSLSRQQGISATSSSSIVTLTPVDSASSSRSSATSIIKPNMPVSSNDSKTQSSVSVVDAFQSTKSSYPSITSADPTTLASENGLVGSSSSAHPITLDRTYASAHASVTDIVSRVTDSTRHTTLVTSNINIQSEVGNPNYSGPKDTTITKQSAFMTSPASTSTISNVQSTASVMNHSIEDNISAAASLESVSGTSTKDYSSQSSAIHYTNSFTTTTTNAFITSKHSIAAVSTGAITSSASISLIMEGSANIEAVGKLVWLAAALPLAFI.

Disordered stretches follow at residues 1 to 65, 133 to 183, 197 to 274, and 455 to 480; these read MYRT…IGNS, ESTT…SAVT, SVDQ…TVTI, and SASS…DSKT. 2 stretches are compositionally biased toward low complexity: residues 9-56 and 158-183; these read EVTT…TTSA and VTTS…SAVT. Positions 455–465 are enriched in low complexity; it reads SASSSRSSATS.

The polypeptide is Pheromone-regulated protein PRM7 (PRM7) (Saccharomyces cerevisiae (strain ATCC 204508 / S288c) (Baker's yeast)).